A 334-amino-acid polypeptide reads, in one-letter code: Fructose-1,6-bisphosphatase class 1 2 (334 aa).

Residues Glu92, Asp114, Leu116, and Asp117 each coordinate Mg(2+). Substrate is bound by residues Asp117–Ser120, Asn208, and Lys274. Residue Glu280 coordinates Mg(2+).

The protein belongs to the FBPase class 1 family. In terms of assembly, homotetramer. Mg(2+) serves as cofactor.

The protein localises to the cytoplasm. The catalysed reaction is beta-D-fructose 1,6-bisphosphate + H2O = beta-D-fructose 6-phosphate + phosphate. It participates in carbohydrate biosynthesis; gluconeogenesis. This is Fructose-1,6-bisphosphatase class 1 2 from Albidiferax ferrireducens (strain ATCC BAA-621 / DSM 15236 / T118) (Rhodoferax ferrireducens).